The sequence spans 462 residues: 3-oxoacyl-[acyl-carrier-protein] synthase I, chloroplastic (462 aa).

The N-terminal 35 residues, 1-35 (MHAHAAHALGLRVPPPAFPRRRARPRRRPAAAVLA), are a transit peptide targeting the chloroplast. The disordered stretch occupies residues 1–45 (MHAHAAHALGLRVPPPAFPRRRARPRRRPAAAVLATSAAPQRETD). The span at 19–29 (PRRRARPRRRP) shows a compositional bias: basic residues. Low complexity predominate over residues 30–39 (AAAVLATSAA). Residues 47–459 (RKRVVITGMG…GHNSVVVFAP (413 aa)) form the Ketosynthase family 3 (KS3) domain. Catalysis depends on for beta-ketoacyl synthase activity residues Cys-213, His-353, and His-389.

This sequence belongs to the thiolase-like superfamily. Beta-ketoacyl-ACP synthases family. Homodimer.

The protein localises to the plastid. The protein resides in the chloroplast. It carries out the reaction a fatty acyl-[ACP] + malonyl-[ACP] + H(+) = a 3-oxoacyl-[ACP] + holo-[ACP] + CO2. In terms of biological role, catalyzes the condensation reaction of fatty acid synthesis by the addition to an acyl acceptor of two carbons from malonyl-ACP. Specific for elongation from C-10 to unsaturated C-16 and C-18 fatty acids. This Hordeum vulgare (Barley) protein is 3-oxoacyl-[acyl-carrier-protein] synthase I, chloroplastic (KAS12).